The sequence spans 96 residues: uncharacterized protein (96 aa).

The next 3 helical transmembrane spans lie at phenylalanine 2–phenylalanine 22, alanine 38–leucine 58, and leucine 68–valine 88.

Its subcellular location is the membrane. This is an uncharacterized protein from Schizosaccharomyces pombe (strain 972 / ATCC 24843) (Fission yeast).